The sequence spans 385 residues: Centrosomal protein of 44 kDa (385 aa).

The segment at 11-192 (RNLEQVLRSL…GANIPEDTVT (182 aa)) is binds with microtubules and centrioles. The segment at 126–154 (LEKTPSQQRKKTSSAKSEPCSSTEKTSTE) is disordered. A compositionally biased stretch (polar residues) spans 139–154 (SAKSEPCSSTEKTSTE). Positions 230 to 271 (EVTALQSMLAECQEKLKKLTCIESRLESLEEKMKGKVLVNEK) form a coiled coil. A disordered region spans residues 303-348 (SEDYSSSSDMDSLNPDRKSKEERHANIPLSSGYSTVSSDSTPRTST). The span at 305-314 (DYSSSSDMDS) shows a compositional bias: low complexity. Basic and acidic residues predominate over residues 316 to 327 (NPDRKSKEERHA). Residues 332-342 (SSGYSTVSSDS) are compositionally biased toward low complexity. Serine 342 carries the phosphoserine modification. A Phosphothreonine modification is found at threonine 343. The stretch at 358–381 (SEETTMQKMERMKKMFEETAELLK) forms a coiled coil.

As to quaternary structure, interacts with CROCC. Interacts with POC1B; the interaction is direct and recruits POC1B to centriolar microtubules. Binds to centriolar microtubules.

It is found in the cytoplasm. The protein localises to the cytoskeleton. The protein resides in the microtubule organizing center. Its subcellular location is the centrosome. It localises to the centriole. It is found in the spindle pole. The protein localises to the midbody. Its function is as follows. Centriole-enriched microtubule-binding protein involved in centriole biogenesis. In collaboration with CEP295 and POC1B, is required for the centriole-to-centrosome conversion by ensuring the formation of bona fide centriole wall. Functions as a linker component that maintains centrosome cohesion. Associates with CROCC and regulates its stability and localization to the centrosome. The chain is Centrosomal protein of 44 kDa (CEP44) from Bos taurus (Bovine).